Consider the following 135-residue polypeptide: UPF0102 protein Mkms_2031 (135 aa).

This sequence belongs to the UPF0102 family.

In Mycobacterium sp. (strain KMS), this protein is UPF0102 protein Mkms_2031.